Reading from the N-terminus, the 234-residue chain is Adenosine 5'-phosphosulfate reductase (234 aa).

Cys-120, Cys-121, Cys-203, and Cys-206 together coordinate [4Fe-4S] cluster. The active-site Nucleophile; cysteine thiosulfonate intermediate is the Cys-229.

Belongs to the PAPS reductase family. CysH subfamily. [4Fe-4S] cluster serves as cofactor.

The protein resides in the cytoplasm. The catalysed reaction is [thioredoxin]-disulfide + sulfite + AMP + 2 H(+) = adenosine 5'-phosphosulfate + [thioredoxin]-dithiol. It participates in sulfur metabolism; hydrogen sulfide biosynthesis; sulfite from sulfate. Functionally, catalyzes the formation of sulfite from adenosine 5'-phosphosulfate (APS) using thioredoxin as an electron donor. The sequence is that of Adenosine 5'-phosphosulfate reductase from Bacillus cytotoxicus (strain DSM 22905 / CIP 110041 / 391-98 / NVH 391-98).